The primary structure comprises 84 residues: Large ribosomal subunit protein bL27 (84 aa).

The disordered stretch occupies residues 1 to 24 (MAHKKGAASTKNGRDSNSQRLGVK). Residues 9-20 (STKNGRDSNSQR) are compositionally biased toward polar residues.

It belongs to the bacterial ribosomal protein bL27 family.

In Nocardioides sp. (strain ATCC BAA-499 / JS614), this protein is Large ribosomal subunit protein bL27.